Consider the following 204-residue polypeptide: FMN-dependent NADH:quinone oxidoreductase 1 (204 aa).

FMN is bound by residues serine 14, 20–22 (SMS), and 99–102 (MYNF).

It belongs to the azoreductase type 1 family. Homodimer. It depends on FMN as a cofactor.

It carries out the reaction 2 a quinone + NADH + H(+) = 2 a 1,4-benzosemiquinone + NAD(+). The catalysed reaction is N,N-dimethyl-1,4-phenylenediamine + anthranilate + 2 NAD(+) = 2-(4-dimethylaminophenyl)diazenylbenzoate + 2 NADH + 2 H(+). Quinone reductase that provides resistance to thiol-specific stress caused by electrophilic quinones. In terms of biological role, also exhibits azoreductase activity. Catalyzes the reductive cleavage of the azo bond in aromatic azo compounds to the corresponding amines. In Hahella chejuensis (strain KCTC 2396), this protein is FMN-dependent NADH:quinone oxidoreductase 1.